Consider the following 882-residue polypeptide: Pentatricopeptide repeat-containing protein At3g03580 (882 aa).

PPR repeat units follow at residues 3–37 (TRVS…GLDS), 38–68 (SDFF…VSPA), 70–104 (NVYL…KVSP), 105–139 (DKYT…GFES), 140–170 (DLFV…MPVR), 171–205 (DLVS…WIVP), 206–240 (DSFT…GVNS), 241–271 (VVVV…MDVR), 272–307 (DSVS…KPDL), 309–340 (TVSS…GFVL), 341–371 (ESTV…MECK), 372–406 (DTVS…EEQA), 407–441 (DHIT…GICI), 442–472 (DLSV…MGTG), 473–507 (DTVT…EVVP), 508–542 (DMAT…GYES), 543–573 (ELQI…MSRR), 574–608 (DVVT…GIVP), 609–639 (DSVV…MKTH), and 645–675 (MIEH…MPIK). Residues 680-755 (IWASVLRACR…NPGYSWIEVG (76 aa)) form a type E motif region. The segment at 756-786 (KNVHVFSSGDDSAPQSEAIYKSLEILYSLMA) is type E(+) motif. Residues 787-882 (KEGYIPDPRE…DGTCSCKDRW (96 aa)) are type DYW motif.

The protein belongs to the PPR family. PCMP-H subfamily.

This Arabidopsis thaliana (Mouse-ear cress) protein is Pentatricopeptide repeat-containing protein At3g03580 (PCMP-H23).